We begin with the raw amino-acid sequence, 355 residues long: Inositol polyphosphate multikinase (355 aa).

Position 1 is an N-acetylmethionine (M1). K31 contributes to the ATP binding site. The residue at position 97 (S97) is a Phosphoserine. ATP contacts are provided by residues 118–120 (ENL) and D131. 127–135 (PNILDIKLG) is a binding site for substrate. Ca(2+)-binding residues include E271 and N274. Over residues 284–304 (FIDDDDDDDDNDDDDDDDAEG) the composition is skewed to acidic residues. Residues 284-317 (FIDDDDDDDDNDDDDDDDAEGSSEGPKDKKTTGS) form a disordered region. ATP is bound at residue D325. Residue G334 participates in Ca(2+) binding.

It belongs to the inositol phosphokinase (IPK) family. Interacts with ARG80 and MCM1. Requires Ca(2+) as cofactor.

It is found in the nucleus. It carries out the reaction 1D-myo-inositol 1,4,5-trisphosphate + 2 ATP = 1D-myo-inositol 1,3,4,5,6-pentakisphosphate + 2 ADP + 2 H(+). The catalysed reaction is 1D-myo-inositol 1,4,5-trisphosphate + ATP = 1D-myo-inositol 1,4,5,6-tetrakisphosphate + ADP + H(+). The enzyme catalyses 1D-myo-inositol 1,4,5-trisphosphate + ATP = 1D-myo-inositol 1,3,4,5-tetrakisphosphate + ADP + H(+). It catalyses the reaction 1D-myo-inositol 1,4,5,6-tetrakisphosphate + ATP = 1D-myo-inositol 1,3,4,5,6-pentakisphosphate + ADP + H(+). It carries out the reaction a 1,2-diacyl-sn-glycero-3-phospho-(1D-myo-inositol-4,5-bisphosphate) + ATP = a 1,2-diacyl-sn-glycero-3-phospho-(1D-myo-inositol-3,4,5-trisphosphate) + ADP + H(+). Its function is as follows. Inositol phosphate kinase with both monophosphoinositol and diphosphoinositol polyphosphate synthase activities. Able to phosphorylate inositol 1,4,5-trisphosphate (Ins(1,4,5)P3) on both the carbon-3 and carbon-6 positions to synthesize inositol 1,3,4,5-tetrakisphosphate (Ins(1,3,4,5)P4) and inositol 1,4,5,6-tetrakisphosphate (Ins(1,4,5,6)P4), and then to subsequently phosphorylate and convert either isomer of InsP4 to inositol 1,3,4,5,6-pentakisphosphate (Ins(1,3,4,5,6)P5). Its predominant in vivo catalytic function is to convert Ins(1,4,5)P3 to Ins(1,4,5,6)P4 to Ins(1,3,4,5,6)P5 via 6- and 3-kinase activities. It can also use Ins(1,3,4,5,6)P5 as a substrate and act as a diphosphoinositol polyphosphate synthase to generate two different isomers of PP-InsP4. Also has a role in transcription regulation. Forms a complex with ARG80, ARG81 and MCM1 (ArgR-MCM1), which coordinates the expression of arginine anabolic and catabolic genes in response to arginine. Recruits ARG80 and MCM21 to stabilize them. Neither the kinase activity nor inositol phosphates are required for the formation of ArgR-MCM1 transcriptional complexes on DNA promoter elements and the control of arginine metabolism. In contrast, only the catalytic activity is required for PHO gene repression by phosphate and for NCR gene activation in response to nitrogen availability, indicating a role for inositol pyrophosphates in these controls. Inositol polyphosphates may be involved in the regulation of chromatin remodeling of transcription. Regulates nuclear mRNA export via inositol phosphate metabolism. Also has lipid kinase activity, transforming the lipid inositol phosphatidylinositol 4,5-bisphosphate (PI(4,5)P2) into phosphatidylinositol 3,4,5-trisphosphate (PI(3,4,5)P3) in the nucleus. Its kinase activity is necessary for the propagation of most [PSI+] prion variants. In Saccharomyces cerevisiae (strain ATCC 204508 / S288c) (Baker's yeast), this protein is Inositol polyphosphate multikinase (ARG82).